The following is a 977-amino-acid chain: MASTASYSPSPTSQWRTQKLPKRFNFYVIHNQEFGKLSQSSSLSTSSFPKTLKLPVIHMPINNIQSQTTVCVSTDENLEELVNLQKIPNGFLNKESNKRVFIQDPPWVSSLFMNSLFVRAKQVQGVRREFREIERRRRYAMLRRRQIKAETEAWEQMVEEYRELEREMCEKKLAPNLPYVKKLLLGWFEPLRQAIEKEQNAETTVKHRAAFAPHIDSLPADKMAVIVMHKLMGLLMMGGKEERCVQVVQAAVQIGMAVENEVRIHNFLEKTKKLQKHMTGAQSQEDMSKETMILRKRVKSLIKRNRVVEVRKLMKSEEPESWGRDTQAKLGCRLLELLTETAYVQRPVDQSADTPPDIRPAFRHVFKIATRDPGKNIVKKYGVIECDPLVVAGVDRTVKQMMIPYVPMLVPPKKWRGYDKGGYLFLPSYLMRTHGSRRQQDAVRGVPTKQMQQVYEALDTLGSTKWRVNKRILNVVESIWAGGGNIAGLVDRKDVPIPELSNSDDIMEVKKWKWKVRKSKKINQELHSQRCDTELKLSVARKLKDEEGFYYPHNLDFRGRAYPMHPHLNHLSSDLCRGILEFAEGRPLGKSGLRWLKIHLASLYAGGVEKLCYDARLAFVENHIHDILDSANNPLNGNRWWLNAEDPFQCLAACINLSEALKSSSPHTVISHLPIHQDGSCNGLQHYAALGRDSMEAAAVNLVAGEKPADVYTEIALRVDHIIRGDSIKDPAIDPNALLAKLLIDQVDRKLVKQTVMTSVYGVTYVGAREQIKRRLEEKGLIDDDRLLFTASCYAAKVTLAALGELFQAARGTMTWLGDCAKVIALENQPVRWTTPLGLPVVQPYFKTQRHVIRTSLQILALQREGDAVEVRKQRTAFPPNFVHSLDGSHMMMTAVACRDAGLQFAGVHDSFWTHACDVDQMNRILREKFVELYSLPILEDLLENFQKSYPALTFPPLPKRGDFNLREVLESPYFFN.

Residues methionine 1–cysteine 71 constitute a chloroplast transit peptide. Residues aspartate 678, lysine 753, and aspartate 910 contribute to the active site.

Belongs to the phage and mitochondrial RNA polymerase family.

Its subcellular location is the plastid. It localises to the chloroplast. The enzyme catalyses RNA(n) + a ribonucleoside 5'-triphosphate = RNA(n+1) + diphosphate. In terms of biological role, DNA-dependent RNA polymerase catalyzes the transcription of DNA into RNA using the four ribonucleoside triphosphates as substrates. This Nicotiana tabacum (Common tobacco) protein is DNA-directed RNA polymerase 3B, chloroplastic (RPOT3-TOM).